An 88-amino-acid chain; its full sequence is uncharacterized protein (88 aa).

Expressed in a wide variety of tissues.

This is an uncharacterized protein from Homo sapiens (Human).